The sequence spans 850 residues: DNA polymerase I (850 aa).

The 5'-3' exonuclease domain maps to 1–288; sequence MKLVIFDGNS…SIIKRLGLSE (288 aa). The interval 470-850 is polymerase; that stretch reads VDRDALIQYT…KEGLNWYETK (381 aa).

The protein belongs to the DNA polymerase type-A family.

The enzyme catalyses DNA(n) + a 2'-deoxyribonucleoside 5'-triphosphate = DNA(n+1) + diphosphate. Its function is as follows. In addition to polymerase activity, this DNA polymerase exhibits 3'-5' and 5'-3' exonuclease activity. The polypeptide is DNA polymerase I (polA) (Caldicellulosiruptor bescii (strain ATCC BAA-1888 / DSM 6725 / KCTC 15123 / Z-1320) (Anaerocellum thermophilum)).